Consider the following 729-residue polypeptide: Replication restart protein PriA (729 aa).

Positions 209 to 376 (QTALGRFRSF…QSGAYRLLQL (168 aa)) constitute a Helicase ATP-binding domain. 222 to 229 (GITGSGKT) provides a ligand contact to ATP. A DEAH box motif is present at residues 319-322 (DEEH). Residues cysteine 436, cysteine 439, cysteine 445, cysteine 448, cysteine 463, cysteine 466, cysteine 476, and cysteine 479 each coordinate Zn(2+). The 153-residue stretch at 471-623 (PIPFKCPDCG…YAVFAENELN (153 aa)) folds into the Helicase C-terminal domain.

This sequence belongs to the helicase family. PriA subfamily. Interacts with PriB with high affinity in the absence of DNA. Component of the replication restart primosome. Zn(2+) is required as a cofactor.

It catalyses the reaction Couples ATP hydrolysis with the unwinding of duplex DNA by translocating in the 3'-5' direction.. The catalysed reaction is ATP + H2O = ADP + phosphate + H(+). Its activity is regulated as follows. Helicase and ATPase activities on forked DNA are stimulated by PriB; E.coli PriB does not stimulate this helicase. PriA:PriB complex-catalyzed duplex DNA winding is inhibited by CGS 15943 (CHEBI:131351). CGS 15943 decreases ATP hydrolysis and decreases PriA's affinity for DNA. Initiates the restart of stalled replication forks, which reloads the replicative helicase on sites other than the origin of replication. Recognizes and binds to abandoned replication forks and remodels them to uncover a helicase loading site. Promotes assembly of the primosome at these replication forks. Functionally, DNA helicase with greatest unwinding activity on forked DNA substrates with relatively short duplex lagging strand arms. A DNA-dependent ATPase. Required for DNA transformation and DNA repair. Binds single-stranded (ss)DNA and replication fork-like DNA but not double-stranded (ds)DNA. The chain is Replication restart protein PriA from Neisseria gonorrhoeae (strain ATCC 700825 / FA 1090).